The primary structure comprises 348 residues: Holliday junction branch migration complex subunit RuvB (348 aa).

The interval threonine 4–tyrosine 184 is large ATPase domain (RuvB-L). Residues isoleucine 23, arginine 24, glycine 65, lysine 68, threonine 69, threonine 70, glutamate 131–phenylalanine 133, arginine 174, tyrosine 184, and arginine 221 contribute to the ATP site. Threonine 69 contributes to the Mg(2+) binding site. The small ATPAse domain (RuvB-S) stretch occupies residues serine 185–aspartate 255. Positions glutamate 258–glutamate 348 are head domain (RuvB-H). Residues arginine 294, arginine 313, and arginine 318 each coordinate DNA.

It belongs to the RuvB family. Homohexamer. Forms an RuvA(8)-RuvB(12)-Holliday junction (HJ) complex. HJ DNA is sandwiched between 2 RuvA tetramers; dsDNA enters through RuvA and exits via RuvB. An RuvB hexamer assembles on each DNA strand where it exits the tetramer. Each RuvB hexamer is contacted by two RuvA subunits (via domain III) on 2 adjacent RuvB subunits; this complex drives branch migration. In the full resolvosome a probable DNA-RuvA(4)-RuvB(12)-RuvC(2) complex forms which resolves the HJ.

The protein localises to the cytoplasm. It catalyses the reaction ATP + H2O = ADP + phosphate + H(+). Its function is as follows. The RuvA-RuvB-RuvC complex processes Holliday junction (HJ) DNA during genetic recombination and DNA repair, while the RuvA-RuvB complex plays an important role in the rescue of blocked DNA replication forks via replication fork reversal (RFR). RuvA specifically binds to HJ cruciform DNA, conferring on it an open structure. The RuvB hexamer acts as an ATP-dependent pump, pulling dsDNA into and through the RuvAB complex. RuvB forms 2 homohexamers on either side of HJ DNA bound by 1 or 2 RuvA tetramers; 4 subunits per hexamer contact DNA at a time. Coordinated motions by a converter formed by DNA-disengaged RuvB subunits stimulates ATP hydrolysis and nucleotide exchange. Immobilization of the converter enables RuvB to convert the ATP-contained energy into a lever motion, pulling 2 nucleotides of DNA out of the RuvA tetramer per ATP hydrolyzed, thus driving DNA branch migration. The RuvB motors rotate together with the DNA substrate, which together with the progressing nucleotide cycle form the mechanistic basis for DNA recombination by continuous HJ branch migration. Branch migration allows RuvC to scan DNA until it finds its consensus sequence, where it cleaves and resolves cruciform DNA. This chain is Holliday junction branch migration complex subunit RuvB, found in Pseudomonas entomophila (strain L48).